Consider the following 395-residue polypeptide: Elongation factor Tu (395 aa).

The tr-type G domain maps to 10-204 (KPHVNIGTIG…AVDNYIPHPV (195 aa)). The tract at residues 19-26 (GHVDHGKT) is G1. 19–26 (GHVDHGKT) is a binding site for GTP. Residue threonine 26 coordinates Mg(2+). The tract at residues 60–64 (GITIS) is G2. A G3 region spans residues 81 to 84 (DCPG). Residues 81-85 (DCPGH) and 136-139 (NKVD) contribute to the GTP site. The interval 136–139 (NKVD) is G4. Residues 174–176 (SAL) form a G5 region.

This sequence belongs to the TRAFAC class translation factor GTPase superfamily. Classic translation factor GTPase family. EF-Tu/EF-1A subfamily. Monomer.

It localises to the cytoplasm. It carries out the reaction GTP + H2O = GDP + phosphate + H(+). In terms of biological role, GTP hydrolase that promotes the GTP-dependent binding of aminoacyl-tRNA to the A-site of ribosomes during protein biosynthesis. This chain is Elongation factor Tu, found in Rickettsia akari (strain Hartford).